The primary structure comprises 358 residues: Peroxidase 54 (358 aa).

Residues 1–31 (MAVTSSSSTCDGFFIISLIVIVSSLFGTSSA) form the signal peptide. Q32 is subject to Pyrrolidone carboxylic acid. N34 and N44 each carry an N-linked (GlcNAc...) asparagine glycan. 4 disulfide bridges follow: C42–C122, C75–C80, C128–C330, and C207–C239. Catalysis depends on H73, which acts as the Proton acceptor. Positions 74, 77, 79, 81, and 83 each coordinate Ca(2+). N-linked (GlcNAc...) asparagine glycosylation is found at N103, N161, and N166. Residue P170 coordinates substrate. N178 is a glycosylation site (N-linked (GlcNAc...) asparagine). Residue H200 participates in heme b binding. T201 is a binding site for Ca(2+). N218, N228, and N242 each carry an N-linked (GlcNAc...) asparagine glycan. Residues D252, T255, and D260 each contribute to the Ca(2+) site. N-linked (GlcNAc...) asparagine glycosylation occurs at N298.

Belongs to the peroxidase family. Classical plant (class III) peroxidase subfamily. Requires heme b as cofactor. Ca(2+) is required as a cofactor.

It is found in the secreted. The protein localises to the vacuole. The catalysed reaction is 2 a phenolic donor + H2O2 = 2 a phenolic radical donor + 2 H2O. Its function is as follows. Removal of H(2)O(2), oxidation of toxic reductants, biosynthesis and degradation of lignin, suberization, auxin catabolism, response to environmental stresses such as wounding, pathogen attack and oxidative stress. These functions might be dependent on each isozyme/isoform in each plant tissue. The polypeptide is Peroxidase 54 (PER54) (Arabidopsis thaliana (Mouse-ear cress)).